The chain runs to 369 residues: UDP-3-O-acylglucosamine N-acyltransferase (369 aa).

Histidine 263 functions as the Proton acceptor in the catalytic mechanism.

The protein belongs to the transferase hexapeptide repeat family. LpxD subfamily. As to quaternary structure, homotrimer.

It carries out the reaction a UDP-3-O-[(3R)-3-hydroxyacyl]-alpha-D-glucosamine + a (3R)-hydroxyacyl-[ACP] = a UDP-2-N,3-O-bis[(3R)-3-hydroxyacyl]-alpha-D-glucosamine + holo-[ACP] + H(+). It participates in bacterial outer membrane biogenesis; LPS lipid A biosynthesis. Catalyzes the N-acylation of UDP-3-O-acylglucosamine using 3-hydroxyacyl-ACP as the acyl donor. Is involved in the biosynthesis of lipid A, a phosphorylated glycolipid that anchors the lipopolysaccharide to the outer membrane of the cell. This chain is UDP-3-O-acylglucosamine N-acyltransferase, found in Burkholderia vietnamiensis (strain G4 / LMG 22486) (Burkholderia cepacia (strain R1808)).